Reading from the N-terminus, the 263-residue chain is Hydroxyethylthiazole kinase (263 aa).

Substrate is bound at residue M45. Residues R121 and S167 each coordinate ATP. G194 contributes to the substrate binding site.

The protein belongs to the Thz kinase family. It depends on Mg(2+) as a cofactor.

It carries out the reaction 5-(2-hydroxyethyl)-4-methylthiazole + ATP = 4-methyl-5-(2-phosphooxyethyl)-thiazole + ADP + H(+). The protein operates within cofactor biosynthesis; thiamine diphosphate biosynthesis; 4-methyl-5-(2-phosphoethyl)-thiazole from 5-(2-hydroxyethyl)-4-methylthiazole: step 1/1. In terms of biological role, catalyzes the phosphorylation of the hydroxyl group of 4-methyl-5-beta-hydroxyethylthiazole (THZ). The sequence is that of Hydroxyethylthiazole kinase from Vibrio campbellii (strain ATCC BAA-1116).